The sequence spans 442 residues: Coiled-coil domain-containing protein 91 (442 aa).

Residues 1–16 (MDDDDFGGFEAAETFD) form a GGA1-binding motif region. The segment at 1 to 27 (MDDDDFGGFEAAETFDGEQGGNQAVSP) is disordered. Phosphoserine is present on residues Ser43 and Ser46. Disordered regions lie at residues 48 to 80 (ELIL…ADSS) and 114 to 134 (HGAL…SNSQ). Coiled coils occupy residues 130 to 210 (VSNS…GHEA), 253 to 318 (HAQH…MKDV), and 346 to 408 (ARDQ…RRLD). The tract at residues 211 to 414 (LSIIVDEYKA…RRLDQVTRQR (204 aa)) is homodimerization.

As to quaternary structure, homodimer. Interacts with GGA1, GGA2 and AP1G1.

Its subcellular location is the membrane. The protein localises to the golgi apparatus. The protein resides in the trans-Golgi network membrane. It localises to the trans-Golgi network. In terms of biological role, involved in the regulation of membrane traffic through the trans-Golgi network (TGN). Functions in close cooperation with the GGAs in the sorting of hydrolases to lysosomes. In Mus musculus (Mouse), this protein is Coiled-coil domain-containing protein 91 (Ccdc91).